The primary structure comprises 634 residues: Probable potassium transport system protein Kup (634 aa).

A run of 12 helical transmembrane segments spans residues 21-41 (LVIG…LYTL), 58-78 (VLGI…LKYV), 110-130 (MYVV…DGVI), 147-167 (APKL…MLFL), 179-199 (AFGP…VYNM), 223-243 (WHAV…EALY), 258-278 (WQFV…ALVL), 296-316 (ALYP…QALI), 348-368 (IYVP…VIGF), 377-397 (AYGV…IIYA), 403-423 (VPAP…CAFF), and 427-447 (IIKF…LFTL).

Belongs to the HAK/KUP transporter (TC 2.A.72) family.

Its subcellular location is the cell inner membrane. The catalysed reaction is K(+)(in) + H(+)(in) = K(+)(out) + H(+)(out). Its function is as follows. Transport of potassium into the cell. Likely operates as a K(+):H(+) symporter. This Xanthomonas axonopodis pv. citri (strain 306) protein is Probable potassium transport system protein Kup.